A 142-amino-acid polypeptide reads, in one-letter code: Large ribosomal subunit protein uL13 (142 aa).

The protein belongs to the universal ribosomal protein uL13 family. As to quaternary structure, part of the 50S ribosomal subunit.

Its function is as follows. This protein is one of the early assembly proteins of the 50S ribosomal subunit, although it is not seen to bind rRNA by itself. It is important during the early stages of 50S assembly. This chain is Large ribosomal subunit protein uL13, found in Yersinia enterocolitica serotype O:8 / biotype 1B (strain NCTC 13174 / 8081).